Here is a 111-residue protein sequence, read N- to C-terminus: Large ribosomal subunit protein uL22 (111 aa).

This sequence belongs to the universal ribosomal protein uL22 family. As to quaternary structure, part of the 50S ribosomal subunit.

Functionally, this protein binds specifically to 23S rRNA; its binding is stimulated by other ribosomal proteins, e.g. L4, L17, and L20. It is important during the early stages of 50S assembly. It makes multiple contacts with different domains of the 23S rRNA in the assembled 50S subunit and ribosome. The globular domain of the protein is located near the polypeptide exit tunnel on the outside of the subunit, while an extended beta-hairpin is found that lines the wall of the exit tunnel in the center of the 70S ribosome. The protein is Large ribosomal subunit protein uL22 of Xylella fastidiosa (strain M23).